Here is a 213-residue protein sequence, read N- to C-terminus: Achelase-1 (213 aa).

The Peptidase S1 domain maps to 1–213 (IVGGSVTTIG…RYTSWIQSNA (213 aa)). Cysteine 26 and cysteine 42 are disulfide-bonded. Catalysis depends on charge relay system residues histidine 41 and aspartate 86. Cysteines 155 and 172 form a disulfide. Serine 188 (charge relay system) is an active-site residue.

Belongs to the peptidase S1 family. In terms of tissue distribution, hemolymph and saliva of the larval form (caterpillar).

It localises to the secreted. The protein localises to the extracellular space. Sensitive to serine proteinase inhibitors and thiol proteinase inhibitors. Its function is as follows. Fibrinolytic activity; shows preferential cleavage of Arg-Gly bonds in all three fibrinogen chains. Contact with the caterpillars causes severe bleeding, due the anticoagulant effect of the protein. This Lonomia achelous (Giant silkworm moth) protein is Achelase-1.